The sequence spans 311 residues: Aspartate carbamoyltransferase catalytic subunit (311 aa).

2 residues coordinate carbamoyl phosphate: Arg58 and Thr59. Residue Lys86 coordinates L-aspartate. Carbamoyl phosphate contacts are provided by Arg108, His136, and Gln139. Residues Arg169 and Arg223 each contribute to the L-aspartate site. Residues Gly264 and Pro265 each coordinate carbamoyl phosphate.

Belongs to the aspartate/ornithine carbamoyltransferase superfamily. ATCase family. As to quaternary structure, heterododecamer (2C3:3R2) of six catalytic PyrB chains organized as two trimers (C3), and six regulatory PyrI chains organized as three dimers (R2).

The catalysed reaction is carbamoyl phosphate + L-aspartate = N-carbamoyl-L-aspartate + phosphate + H(+). The protein operates within pyrimidine metabolism; UMP biosynthesis via de novo pathway; (S)-dihydroorotate from bicarbonate: step 2/3. Its function is as follows. Catalyzes the condensation of carbamoyl phosphate and aspartate to form carbamoyl aspartate and inorganic phosphate, the committed step in the de novo pyrimidine nucleotide biosynthesis pathway. In Desulfosudis oleivorans (strain DSM 6200 / JCM 39069 / Hxd3) (Desulfococcus oleovorans), this protein is Aspartate carbamoyltransferase catalytic subunit.